The following is a 182-amino-acid chain: UPF0397 protein BA_2640/GBAA_2640/BAS2460 (182 aa).

The next 5 membrane-spanning stretches (helical) occupy residues 9 to 29, 40 to 60, 71 to 91, 114 to 134, and 142 to 162; these read VVAIGIGSALYGILGLWGFSI, AILTVFGALFGPVAGLLIGLI, WSIWWGWVISSGIIGFTMGFI, ITGLIGIVIAIIFAGAFDIIV, and IVIQVLGATIADVIVFLVLGL.

This sequence belongs to the UPF0397 family.

It localises to the cell membrane. The protein is UPF0397 protein BA_2640/GBAA_2640/BAS2460 of Bacillus anthracis.